The chain runs to 1295 residues: Phosphoribosylformylglycinamidine synthase (1295 aa).

The segment at 305–327 is disordered; that stretch reads WPGAATGSGGEIRDEGATGRGAK. ATP contacts are provided by residues 307-318 and Ala-678; that span reads GAATGSGGEIRD. Residues Glu-718, Asn-722, and Asp-884 each coordinate Mg(2+). Ser-886 is an ATP binding site. In terms of domain architecture, Glutamine amidotransferase type-1 spans 1042–1295; sequence VAVLREQGVN…IFRNARKQLG (254 aa). Cys-1135 functions as the Nucleophile in the catalytic mechanism. Active-site residues include His-1260 and Glu-1262.

The protein in the N-terminal section; belongs to the FGAMS family. As to quaternary structure, monomer.

Its subcellular location is the cytoplasm. The catalysed reaction is N(2)-formyl-N(1)-(5-phospho-beta-D-ribosyl)glycinamide + L-glutamine + ATP + H2O = 2-formamido-N(1)-(5-O-phospho-beta-D-ribosyl)acetamidine + L-glutamate + ADP + phosphate + H(+). Its pathway is purine metabolism; IMP biosynthesis via de novo pathway; 5-amino-1-(5-phospho-D-ribosyl)imidazole from N(2)-formyl-N(1)-(5-phospho-D-ribosyl)glycinamide: step 1/2. Its function is as follows. Phosphoribosylformylglycinamidine synthase involved in the purines biosynthetic pathway. Catalyzes the ATP-dependent conversion of formylglycinamide ribonucleotide (FGAR) and glutamine to yield formylglycinamidine ribonucleotide (FGAM) and glutamate. This Escherichia coli (strain UTI89 / UPEC) protein is Phosphoribosylformylglycinamidine synthase.